Consider the following 286-residue polypeptide: Pantothenate synthetase (286 aa).

32-39 is an ATP binding site; it reads MGALHEGH. Catalysis depends on H39, which acts as the Proton donor. Residue Q63 participates in (R)-pantoate binding. Q63 lines the beta-alanine pocket. Residue 149 to 152 coordinates ATP; the sequence is GEKD. Q155 serves as a coordination point for (R)-pantoate. ATP-binding positions include L178 and 186–189; that span reads SSSR.

The protein belongs to the pantothenate synthetase family. In terms of assembly, homodimer.

Its subcellular location is the cytoplasm. It carries out the reaction (R)-pantoate + beta-alanine + ATP = (R)-pantothenate + AMP + diphosphate + H(+). It functions in the pathway cofactor biosynthesis; (R)-pantothenate biosynthesis; (R)-pantothenate from (R)-pantoate and beta-alanine: step 1/1. In terms of biological role, catalyzes the condensation of pantoate with beta-alanine in an ATP-dependent reaction via a pantoyl-adenylate intermediate. In Bartonella quintana (strain Toulouse) (Rochalimaea quintana), this protein is Pantothenate synthetase.